A 338-amino-acid polypeptide reads, in one-letter code: NAC domain-containing protein 46 (338 aa).

In terms of domain architecture, NAC spans Leu-20–Lys-171. A DNA-binding region spans residues Val-118–Thr-177.

In terms of assembly, interacts with RCD1.

It is found in the nucleus. Its function is as follows. Transcriptional activator that acts as a positive regulator of leaf senescence. Activates NYC1, SGR1, SGR2 and PAO, which are genes involved in chlorophyll catabolic processes. Activates senescence-associated genes, such as RNS1, SAG12 and SAG13. The polypeptide is NAC domain-containing protein 46 (Arabidopsis thaliana (Mouse-ear cress)).